The following is a 113-amino-acid chain: Large ribosomal subunit protein bL17 (113 aa).

This sequence belongs to the bacterial ribosomal protein bL17 family. Part of the 50S ribosomal subunit. Contacts protein L32.

This chain is Large ribosomal subunit protein bL17, found in Caldicellulosiruptor saccharolyticus (strain ATCC 43494 / DSM 8903 / Tp8T 6331).